A 402-amino-acid polypeptide reads, in one-letter code: Phosphoglycerate kinase (402 aa).

Substrate-binding positions include 29 to 31 (DFN), Arg45, 69 to 72 (HLGR), Arg125, and Arg158. Residues Lys209, Glu331, and 357 to 360 (GGDT) contribute to the ATP site.

It belongs to the phosphoglycerate kinase family.

Its subcellular location is the cytoplasm. It carries out the reaction (2R)-3-phosphoglycerate + ATP = (2R)-3-phospho-glyceroyl phosphate + ADP. Its pathway is carbohydrate degradation; glycolysis; pyruvate from D-glyceraldehyde 3-phosphate: step 2/5. This Helicobacter pylori (strain J99 / ATCC 700824) (Campylobacter pylori J99) protein is Phosphoglycerate kinase (pgk).